Here is a 267-residue protein sequence, read N- to C-terminus: MSLSLDGVDLVHADGQRALADIRLRLAAGERVALIGPSGAGKTSLLRVLASQWRPSAGRVELLGEEPWALSAAARQRLRARIGLVHQAPPLPPRQRVVSAVLAGRLGQWPLWKSLVSLVYPLDRAGAHDALQRLDLGDKLFQRCDQLSGGQLQRVGIARVLYQRAELILADEPVSAMDPVLAGHTLALLNREAAARGSTLLASLHAVDLALQHFPRVIGLRAGRIAFDLPAGEVDRAALDALYANEQLQAERASPAGEPAVMHIPRC.

In terms of domain architecture, ABC transporter spans 3-247 (LSLDGVDLVH…ALDALYANEQ (245 aa)). 36 to 43 (GPSGAGKT) contacts ATP.

Belongs to the ABC transporter superfamily. Phosphonates importer (TC 3.A.1.9.1) family. The complex is composed of two ATP-binding proteins (PhnC), two transmembrane proteins (PhnE) and a solute-binding protein (PhnD).

The protein localises to the cell inner membrane. It carries out the reaction phosphonate(out) + ATP + H2O = phosphonate(in) + ADP + phosphate + H(+). Its function is as follows. Part of the ABC transporter complex PhnCDE involved in phosphonates import. Responsible for energy coupling to the transport system. This is Phosphonates import ATP-binding protein PhnC 1 from Pseudomonas aeruginosa (strain ATCC 15692 / DSM 22644 / CIP 104116 / JCM 14847 / LMG 12228 / 1C / PRS 101 / PAO1).